The chain runs to 394 residues: MSKEKFERVKPHVNVGTIGHVDHGKTTLTAAICTTLAKVYGGAARDFASIDNAPEERERGITISTSHVEYDTPARHYAHVDCPGHADYVKNMITGAAQMDGGILVVAATDGPMPQTREHILLGRQVGIPYIIVFMNKCDMVDDEELLELVEMEVRELLSEYDFPGDDLPVIQGSALGALNGEEQWEAKIIELAEALDTYIPEPERAIDLPFLMPIEDVFSIQGRGTVVTGRIERGILKVGDEVAIVGIKDTTTTTCTGVEMFRKLLDEGRAGENVGALLRGTKRDEVERGQVLAKPGSITPHTKFESEVYVLSKDEGGRHTPFFKGYRPQFYFRTTDVTGDISLPEGVEMVMPGDNIQMVVELISPIAMDEGLRFAIREGGRTVGAGVVAKIFA.

The tr-type G domain occupies Lys-10–Glu-204. The G1 stretch occupies residues Gly-19–Thr-26. Gly-19–Thr-26 is a GTP binding site. Thr-26 provides a ligand contact to Mg(2+). Residues Gly-60 to Ser-64 form a G2 region. Residues Asp-81–Gly-84 form a G3 region. GTP contacts are provided by residues Asp-81–His-85 and Asn-136–Asp-139. The interval Asn-136–Asp-139 is G4. The G5 stretch occupies residues Ser-174–Leu-176.

The protein belongs to the TRAFAC class translation factor GTPase superfamily. Classic translation factor GTPase family. EF-Tu/EF-1A subfamily. Monomer.

It localises to the cytoplasm. It carries out the reaction GTP + H2O = GDP + phosphate + H(+). Its function is as follows. GTP hydrolase that promotes the GTP-dependent binding of aminoacyl-tRNA to the A-site of ribosomes during protein biosynthesis. In Vibrio vulnificus (strain CMCP6), this protein is Elongation factor Tu 2.